The primary structure comprises 341 residues: Holliday junction branch migration complex subunit RuvB (341 aa).

Residues 1–21 form a disordered region; sequence MSQPDPMLRPEPLESDGEDRA. Residues 4 to 183 are large ATPase domain (RuvB-L); the sequence is PDPMLRPEPL…FGIPTRLQFY (180 aa). Residues Leu-22, Arg-23, Gly-64, Lys-67, Thr-68, Thr-69, 130–132, Arg-173, Tyr-183, and Arg-220 each bind ATP; that span reads EDF. Thr-68 is a Mg(2+) binding site. Residues 184–254 form a small ATPAse domain (RuvB-S) region; sequence TIEELDLIVT…IADSALTRLG (71 aa). A head domain (RuvB-H) region spans residues 257 to 341; it reads HLGLDTADRR…PRTQESLFDE (85 aa). DNA is bound by residues Arg-293, Arg-312, and Arg-317.

This sequence belongs to the RuvB family. As to quaternary structure, homohexamer. Forms an RuvA(8)-RuvB(12)-Holliday junction (HJ) complex. HJ DNA is sandwiched between 2 RuvA tetramers; dsDNA enters through RuvA and exits via RuvB. An RuvB hexamer assembles on each DNA strand where it exits the tetramer. Each RuvB hexamer is contacted by two RuvA subunits (via domain III) on 2 adjacent RuvB subunits; this complex drives branch migration. In the full resolvosome a probable DNA-RuvA(4)-RuvB(12)-RuvC(2) complex forms which resolves the HJ.

The protein resides in the cytoplasm. The enzyme catalyses ATP + H2O = ADP + phosphate + H(+). Its function is as follows. The RuvA-RuvB-RuvC complex processes Holliday junction (HJ) DNA during genetic recombination and DNA repair, while the RuvA-RuvB complex plays an important role in the rescue of blocked DNA replication forks via replication fork reversal (RFR). RuvA specifically binds to HJ cruciform DNA, conferring on it an open structure. The RuvB hexamer acts as an ATP-dependent pump, pulling dsDNA into and through the RuvAB complex. RuvB forms 2 homohexamers on either side of HJ DNA bound by 1 or 2 RuvA tetramers; 4 subunits per hexamer contact DNA at a time. Coordinated motions by a converter formed by DNA-disengaged RuvB subunits stimulates ATP hydrolysis and nucleotide exchange. Immobilization of the converter enables RuvB to convert the ATP-contained energy into a lever motion, pulling 2 nucleotides of DNA out of the RuvA tetramer per ATP hydrolyzed, thus driving DNA branch migration. The RuvB motors rotate together with the DNA substrate, which together with the progressing nucleotide cycle form the mechanistic basis for DNA recombination by continuous HJ branch migration. Branch migration allows RuvC to scan DNA until it finds its consensus sequence, where it cleaves and resolves cruciform DNA. This is Holliday junction branch migration complex subunit RuvB from Paracoccus denitrificans (strain Pd 1222).